The chain runs to 305 residues: Serine/threonine-protein phosphatase PP2A catalytic subunit (305 aa).

Mn(2+)-binding residues include Asp-53, His-55, Asp-81, and Asn-113. The active-site Proton donor is His-114. Mn(2+)-binding residues include His-163 and His-237.

Belongs to the PPP phosphatase family. PP-2A subfamily. Mn(2+) serves as cofactor.

It carries out the reaction O-phospho-L-seryl-[protein] + H2O = L-seryl-[protein] + phosphate. It catalyses the reaction O-phospho-L-threonyl-[protein] + H2O = L-threonyl-[protein] + phosphate. The sequence is that of Serine/threonine-protein phosphatase PP2A catalytic subunit from Helianthus annuus (Common sunflower).